The chain runs to 427 residues: Glutamate-1-semialdehyde 2,1-aminomutase (427 aa).

Lys265 is subject to N6-(pyridoxal phosphate)lysine.

Belongs to the class-III pyridoxal-phosphate-dependent aminotransferase family. HemL subfamily. Homodimer. Requires pyridoxal 5'-phosphate as cofactor.

It is found in the cytoplasm. It carries out the reaction (S)-4-amino-5-oxopentanoate = 5-aminolevulinate. Its pathway is porphyrin-containing compound metabolism; protoporphyrin-IX biosynthesis; 5-aminolevulinate from L-glutamyl-tRNA(Glu): step 2/2. This chain is Glutamate-1-semialdehyde 2,1-aminomutase, found in Burkholderia ambifaria (strain MC40-6).